Here is a 118-residue protein sequence, read N- to C-terminus: MANNRAVRVGEQMKKELSDILIRDIKDPRVRFVTVTGVDVTGDLQQATAFITVLGDEEERKATLAGLEKAKGFIRTELGKRIRLRKTPELSFSFDESIQYGNRIESLLRDLNKNDSNE.

It belongs to the RbfA family. As to quaternary structure, monomer. Binds 30S ribosomal subunits, but not 50S ribosomal subunits or 70S ribosomes.

The protein resides in the cytoplasm. In terms of biological role, one of several proteins that assist in the late maturation steps of the functional core of the 30S ribosomal subunit. Associates with free 30S ribosomal subunits (but not with 30S subunits that are part of 70S ribosomes or polysomes). Required for efficient processing of 16S rRNA. May interact with the 5'-terminal helix region of 16S rRNA. The sequence is that of Ribosome-binding factor A from Shouchella clausii (strain KSM-K16) (Alkalihalobacillus clausii).